The chain runs to 547 residues: TBCC domain-containing protein 1 (547 aa).

Positions 304–435 (PHTHRMVVMS…LEDHMAQTGL (132 aa)) constitute a C-CAP/cofactor C-like domain.

This sequence belongs to the TBCC family.

It localises to the cytoplasm. The protein resides in the cytoskeleton. The protein localises to the microtubule organizing center. It is found in the centrosome. Its subcellular location is the spindle pole. Its function is as follows. May play a role in the regulation of centrosome and Golgi apparatus positioning. This is TBCC domain-containing protein 1 (tbccd1) from Xenopus laevis (African clawed frog).